The sequence spans 307 residues: MNFQQQGYRATKPRARASPPTGGPMLFDDTSSGPPPMNNQNYYSSGYNMAEMPAGGQEPGVGNIFADPMANAAMMYGSTLANQGKDIVNKEINRFMSVNKLKYFFAVDTKYVMKKLLLLMFPYTHQDWEVRYHRDTPLTPRHDVNAPDLYIPTMAFITYILLAGMALGIQKRFSPEVLGLCASTALVWMIIEVLVMLLSLYLLTVHTDLSTFDLVAYSGYKYVGMILTVFCGLLFGSDGYYVALAWSSCALMFFIVRSLKMKILSSISADSMGAGASAKPRFRLYITVASAAFQPFIIYWLTAHLVR.

Positions 1-42 (MNFQQQGYRATKPRARASPPTGGPMLFDDTSSGPPPMNNQNY) are disordered. The Cytoplasmic portion of the chain corresponds to 1–148 (MNFQQQGYRA…TPRHDVNAPD (148 aa)). Residues 149 to 169 (LYIPTMAFITYILLAGMALGI) traverse the membrane as a helical segment. Residues 170-184 (QKRFSPEVLGLCAST) lie on the Lumenal side of the membrane. Residues 185 to 205 (ALVWMIIEVLVMLLSLYLLTV) form a helical membrane-spanning segment. At 206–213 (HTDLSTFD) the chain is on the cytoplasmic side. A helical membrane pass occupies residues 214 to 236 (LVAYSGYKYVGMILTVFCGLLFG). The Lumenal portion of the chain corresponds to 237-239 (SDG). The helical transmembrane segment at 240–259 (YYVALAWSSCALMFFIVRSL) threads the bilayer. The Cytoplasmic portion of the chain corresponds to 260 to 285 (KMKILSSISADSMGAGASAKPRFRLY). Residues 286 to 306 (ITVASAAFQPFIIYWLTAHLV) form a helical membrane-spanning segment.

It belongs to the YIF1 family.

The protein localises to the endoplasmic reticulum membrane. It is found in the golgi apparatus membrane. The protein resides in the endoplasmic reticulum-Golgi intermediate compartment membrane. In terms of biological role, possible role in transport between endoplasmic reticulum and Golgi. This is Protein YIF1A (yif1a) from Danio rerio (Zebrafish).